The primary structure comprises 301 residues: Aquaporin NIP2-3 (301 aa).

The next 2 membrane-spanning stretches (helical) occupy residues 57-77 (VISE…AASI) and 91-111 (SVAG…ISGA). Positions 114-116 (NPA) match the NPA 1 motif. 3 helical membrane passes run 132 to 154 (VPFY…KAVL), 172 to 192 (ALAI…AVAT), and 200 to 220 (LAGL…GPVS). Positions 225 to 227 (NPA) match the NPA 2 motif. The chain crosses the membrane as a helical span at residues 238–258 (VFTGLWIYFLGPVVGTLSGAW).

It belongs to the MIP/aquaporin (TC 1.A.8) family. NIP (TC 1.A.8.12) subfamily.

The protein localises to the membrane. Aquaporins facilitate the transport of water and small neutral solutes across cell membranes. The chain is Aquaporin NIP2-3 (NIP2-3) from Zea mays (Maize).